A 78-amino-acid polypeptide reads, in one-letter code: MSTIEERVKKIIGEQLGVKQEEVVNTASFVEDLGADSLDTVELVMALEEEFDTEIPDEEAEKITTVQAAIDYINGHQA.

A Carrier domain is found at 2 to 77 (STIEERVKKI…AAIDYINGHQ (76 aa)). Residue serine 37 is modified to O-(pantetheine 4'-phosphoryl)serine.

The protein belongs to the acyl carrier protein (ACP) family. 4'-phosphopantetheine is transferred from CoA to a specific serine of apo-ACP by AcpS. This modification is essential for activity because fatty acids are bound in thioester linkage to the sulfhydryl of the prosthetic group.

The protein resides in the cytoplasm. The protein operates within lipid metabolism; fatty acid biosynthesis. Its function is as follows. Carrier of the growing fatty acid chain in fatty acid biosynthesis. The polypeptide is Acyl carrier protein (Erwinia tasmaniensis (strain DSM 17950 / CFBP 7177 / CIP 109463 / NCPPB 4357 / Et1/99)).